A 205-amino-acid polypeptide reads, in one-letter code: Small ribosomal subunit protein uS4 (205 aa).

An S4 RNA-binding domain is found at 94–157; sequence SRLDTVVYRM…QQIPLIQESI (64 aa).

Belongs to the universal ribosomal protein uS4 family. In terms of assembly, part of the 30S ribosomal subunit. Contacts protein S5. The interaction surface between S4 and S5 is involved in control of translational fidelity.

One of the primary rRNA binding proteins, it binds directly to 16S rRNA where it nucleates assembly of the body of the 30S subunit. Functionally, with S5 and S12 plays an important role in translational accuracy. The sequence is that of Small ribosomal subunit protein uS4 from Rickettsia typhi (strain ATCC VR-144 / Wilmington).